A 230-amino-acid polypeptide reads, in one-letter code: Thymidylate kinase (230 aa).

Residue 20 to 27 coordinates ATP; that stretch reads GGEGSGKS.

This sequence belongs to the thymidylate kinase family.

It carries out the reaction dTMP + ATP = dTDP + ADP. Its function is as follows. Phosphorylation of dTMP to form dTDP in both de novo and salvage pathways of dTTP synthesis. The polypeptide is Thymidylate kinase (Nitrobacter winogradskyi (strain ATCC 25391 / DSM 10237 / CIP 104748 / NCIMB 11846 / Nb-255)).